The following is a 276-amino-acid chain: O-methyltransferase cnsE (276 aa).

S-adenosyl-L-methionine is bound by residues Gln110, 133-134 (DA), and His155.

It belongs to the methyltransferase superfamily. S-adenosyl-L-methionine is required as a cofactor.

It participates in alkaloid biosynthesis. O-methyltransferase; part of the gene cluster that mediates the biosynthesis of communesins, a prominent class of indole alkaloids with great potential as pharmaceuticals. Communesins are biosynthesized by the coupling of tryptamine and aurantioclavine, two building blocks derived from L-tryptophan. The L-tryptophan decarboxylase cnsB converts L-tryptophan to tryptamine, whereas the tryptophan dimethylallyltransferase cnsF converts L-tryptophan to 4-dimethylallyl tryptophan which is further transformed to aurantioclavine by the aurantioclavine synthase cnsA, probably aided by the catalase cnsD. The cytochrome P450 monooxygenase cnsC catalyzes the heterodimeric coupling between the two different indole moieties, tryptamine and aurantioclavine, to construct vicinal quaternary stereocenters and yield the heptacyclic communesin scaffold. The O-methyltransferase cnsE then methylates the communesin scaffold to produce communesin K, the simplest characterized communesin that contains the heptacyclic core. The dioxygenase cnsJ converts communesin K into communesin I. Acylation to introduce the hexadienyl group at position N16 of communesin I by the acyltransferase cnsK leads to the production of communesin B. The hexadienyl group is produced by the highly reducing polyketide synthase cnsI, before being hydrolytically removed from cnsI by the serine hydrolase cnsH, converted into hexadienyl-CoA by the CoA ligase cnsG, and then transferred to communesin I by cnsK. Surprisingly, cnsK may also be a promiscuous acyltransferase that can tolerate a range of acyl groups, including acetyl-, propionyl-, and butyryl-CoA, which lead to communesins A, G and H respectively. The roles of the alpha-ketoglutarate-dependent dioxygenases cnsM and cnsP have still to be determined. The sequence is that of O-methyltransferase cnsE from Penicillium expansum (Blue mold rot fungus).